The following is an 852-amino-acid chain: Probable nitrite reductase-hydroxylamine oxidoreductase fusion protein (852 aa).

An N-terminal signal peptide occupies residues 1–27; sequence MLNKSAALVPVVLAFLFLFLCFQCLYA. The tract at residues 28–327 is nitrite reductase domain; sequence DIRCLTGKDG…DEGRKTLSAP (300 aa). Plastocyanin-like domains follow at residues 72-169 and 217-307; these read VPGP…IVEP and GETW…VEEG. The Cu cation site is built by histidine 102 and histidine 145. Positions 328–827 are hydroxylamine oxidoreductase domain; the sequence is GQDRQPPTLE…ISWWWGTAQG (500 aa). Residues cysteine 406, cysteine 409, histidine 410, histidine 426, cysteine 463, cysteine 466, histidine 467, histidine 471, cysteine 483, cysteine 486, histidine 487, histidine 505, histidine 537, cysteine 543, cysteine 546, histidine 547, histidine 550, cysteine 563, cysteine 566, histidine 567, cysteine 614, cysteine 617, histidine 618, cysteine 686, cysteine 689, histidine 690, and histidine 813 each contribute to the heme site.

This sequence in the N-terminal section; belongs to the multicopper oxidase family. Requires Cu cation as cofactor. Heme serves as cofactor.

It localises to the encapsulin nanocompartment. It catalyses the reaction hydroxylamine + 4 Fe(III)-[cytochrome c] + H2O = 4 Fe(II)-[cytochrome c] + nitrite + 5 H(+). The enzyme catalyses nitric oxide + Fe(III)-[cytochrome c] + H2O = Fe(II)-[cytochrome c] + nitrite + 2 H(+). A nitrite reductase-hydroxylamine oxidoreductase protein that probably functions in the type 1 encapsulin nanocompartment. Probably involved in reductive catalysis. Targeted to the encapsulin nanocompartment by association with the diheme domain of the encapsulin shell protein (AC Q1Q6L7). Catalyzes the reduction of nitrite to nitric oxide (NO). Catalyzes the oxidation of hydroxylamine to nitrite. The polypeptide is Probable nitrite reductase-hydroxylamine oxidoreductase fusion protein (Kuenenia stuttgartiensis).